The following is a 346-amino-acid chain: Senescence-specific cysteine protease SAG12 (346 aa).

Residues 1 to 25 (MALKHMQIFLFVAIFSSFCFSITLS) form the signal peptide. N-linked (GlcNAc...) asparagine glycosylation is present at N124. Intrachain disulfides connect C151–C192, C185–C225, and C283–C335. Residue C154 is part of the active site. The active site involves H289. Residue N301 is glycosylated (N-linked (GlcNAc...) asparagine). Residue N310 is part of the active site.

It belongs to the peptidase C1 family. Found in senescent leaves, especially in senescence-associated vacuoles- (SAVs) containing cells (e.g. mesophyll and guard cells), and in senescencing ovules of unfertilised pistils.

Its subcellular location is the vacuole. In terms of biological role, cysteine protease that may have a developmental senescence specific cell death function during apoptosis, heavy metal detoxification, and hypersensitive response. The chain is Senescence-specific cysteine protease SAG12 from Arabidopsis thaliana (Mouse-ear cress).